Here is a 338-residue protein sequence, read N- to C-terminus: Starch-binding domain-containing protein 1 (338 aa).

Topologically, residues 1–6 are extracellular; it reads MGAVWS. The helical transmembrane segment at 7-23 threads the bilayer; that stretch reads ALLVGGGLAGALILWLL. Residues 24–338 are Cytoplasmic-facing; it reads RGDSGAPGKD…KVVHGWWGIH (315 aa). Disordered regions lie at residues 30-73 and 120-148; these read PGKD…RELV and KIPDTHSRADSEAARNQSPGSHGGEWRLP. Residues 36–52 are compositionally biased toward low complexity; that stretch reads AEPPQKGAPPGEAAAPG. Residues 53–62 are compositionally biased toward gly residues; sequence DGPGGGGSGG. Phosphoserine is present on Ser68. Basic and acidic residues predominate over residues 122 to 132; it reads PDTHSRADSEA. A phosphoserine mark is found at Ser140, Ser167, and Ser179. The short motif at 185-191 is the LIR element; it reads HEDWEVV. Phosphoserine occurs at positions 195, 196, 205, 209, 212, 220, and 223. Residues 238–337 form the CBM20 domain; that stretch reads SLKPQQVSIQ…DKVVHGWWGI (100 aa).

As to quaternary structure, interacts with the ATG8 family proteins GABARAP and GABARAPL1. Interacts with several glycogen-associated proteins, such as GYS2 (liver glycogen synthase), GDE (glycogen debranching enzyme), GBE1 (glycogen branching enzyme 1) and EPM2A (Laforin). Ubiquitinated, which leads to proteasomal degradation. As to expression, expressed at high level in glycogen-accumulating organs such as muscle and liver. Trace signals are also found in brain, kidney, and pancreas.

The protein localises to the preautophagosomal structure membrane. It localises to the endoplasmic reticulum membrane. Its subcellular location is the cell membrane. The protein resides in the sarcolemma. It is found in the T-tubule. In terms of biological role, acts as a cargo receptor for glycogen. Delivers its cargo to an autophagic pathway called glycophagy, resulting in the transport of glycogen to lysosomes. This chain is Starch-binding domain-containing protein 1, found in Mus musculus (Mouse).